The primary structure comprises 228 residues: Ribosomal RNA small subunit methyltransferase G (228 aa).

Residues Gly89, Leu94, 140–141 (VE), and Arg159 each bind S-adenosyl-L-methionine.

Belongs to the methyltransferase superfamily. RNA methyltransferase RsmG family.

The protein localises to the cytoplasm. It carries out the reaction guanosine(527) in 16S rRNA + S-adenosyl-L-methionine = N(7)-methylguanosine(527) in 16S rRNA + S-adenosyl-L-homocysteine. In terms of biological role, specifically methylates the N7 position of guanine in position 527 of 16S rRNA. This is Ribosomal RNA small subunit methyltransferase G from Burkholderia multivorans (strain ATCC 17616 / 249).